Reading from the N-terminus, the 855-residue chain is Suppressor of tumorigenicity 14 protein homolog (855 aa).

The Cytoplasmic portion of the chain corresponds to 1–55 (MGSNRGRKAGGGSQDFGAGLKYNSRLENMNGFEEGVEFLPANNAKKVEKRGPRRW). Serine 13 carries the post-translational modification Phosphoserine. The helical; Signal-anchor for type II membrane protein transmembrane segment at 56-76 (VVLVAVLFSFLLLSLMAGLLV) threads the bilayer. The Extracellular segment spans residues 77–855 (WHFHYRNVRV…RDWIKEHTGV (779 aa)). One can recognise an SEA domain in the interval 86-203 (VQKVFNGHLR…TSVVAFPIDP (118 aa)). An N-linked (GlcNAc...) asparagine glycan is attached at asparagine 107. Cysteine 214 and cysteine 244 are disulfide-bonded. 2 CUB domains span residues 214 to 331 (CSFA…EATF) and 340 to 444 (CGGF…LAEY). Asparagine 302 and asparagine 365 each carry an N-linked (GlcNAc...) asparagine glycan. 2 cysteine pairs are disulfide-bonded: cysteine 340/cysteine 366 and cysteine 397/cysteine 410. N-linked (GlcNAc...) asparagine glycosylation is present at asparagine 421. LDL-receptor class A domains follow at residues 451–488 (DPCPGMFMCKTGRCIRKELRCDGWADCPDYSDERYCRC), 489–522 (NATHQFTCKNQFCKPLFWVCDSVNDCGDGSDEEG), 523–561 (CSCPAGSFKCSNGKCLPQSQKCNGKDNCGDGSDEASCDS), and 565–604 (VSCTKYTYRCQNGLCLSKGNPECDGKTDCSDGSDEKNCDC). Disulfide bonds link cysteine 453/cysteine 464, cysteine 459/cysteine 477, cysteine 471/cysteine 486, cysteine 488/cysteine 501, cysteine 496/cysteine 514, cysteine 508/cysteine 523, cysteine 525/cysteine 537, cysteine 532/cysteine 550, cysteine 544/cysteine 559, cysteine 567/cysteine 579, cysteine 574/cysteine 593, cysteine 587/cysteine 602, and cysteine 641/cysteine 657. N-linked (GlcNAc...) asparagine glycosylation is present at asparagine 489. In terms of domain architecture, Peptidase S1 spans 615–854 (VVGGTNADEG…VRDWIKEHTG (240 aa)). Catalysis depends on charge relay system residues histidine 656 and aspartate 711. A glycan (N-linked (GlcNAc...) asparagine) is linked at asparagine 772. 2 cysteine pairs are disulfide-bonded: cysteine 776–cysteine 790 and cysteine 801–cysteine 830. Serine 805 (charge relay system) is an active-site residue.

The protein belongs to the peptidase S1 family. As to quaternary structure, interacts with CDCP1. May interact with TMEFF1. As to expression, highly expressed in intestine, kidney, lung, and thymus. Not expressed in skeletal muscle, liver, heart, testis and brain.

The protein localises to the membrane. It carries out the reaction Cleaves various synthetic substrates with Arg or Lys at the P1 position and prefers small side-chain amino acids, such as Ala and Gly, at the P2 position.. Functionally, exhibits trypsin-like activity as defined by cleavage of synthetic substrates with Arg or Lys as the P1 site. Involved in the terminal differentiation of keratinocytes through prostasin (PRSS8) activation and filaggrin (FLG) processing. Proteolytically cleaves and therefore activates TMPRSS13. This Mus musculus (Mouse) protein is Suppressor of tumorigenicity 14 protein homolog (St14).